A 274-amino-acid chain; its full sequence is Kit ligand (274 aa).

Residues 1–25 form the signal peptide; that stretch reads MKKTQTWIITCIYLQLLLFNPLVHT. Q26 bears the Pyrrolidone carboxylic acid mark. The Extracellular segment spans residues 26 to 215; it reads QGICSNRVTD…SNSIEDSSLQ (190 aa). 2 disulfides stabilise this stretch: C29–C114 and C68–C164. N-linked (GlcNAc...) asparagine glycosylation is found at N90, N145, and N196. A helical transmembrane segment spans residues 216 to 238; the sequence is WAAVALPAFFSLVIGFAFGAFYW. Topologically, residues 239–274 are cytoplasmic; the sequence is KKKQPNLTRTVENRQINEEDNEISMLQEKEREFQEV.

It belongs to the SCF family. Homodimer, non-covalently linked. A soluble form is produced by proteolytic processing of isoform 1 in the extracellular domain.

It localises to the cell membrane. It is found in the cytoplasm. The protein localises to the cytoskeleton. Its subcellular location is the cell projection. The protein resides in the lamellipodium. It localises to the filopodium. It is found in the secreted. Functionally, stimulates the proliferation of mast cells. Able to augment the proliferation of both myeloid and lymphoid hematopoietic progenitors in bone marrow culture. Also mediates cell-cell adhesion. Acts synergistically with other cytokines, probably interleukins. The chain is Kit ligand (KITLG) from Bos taurus (Bovine).